The sequence spans 1140 residues: Squamosa promoter-binding-like protein 15 (1140 aa).

Disordered regions lie at residues 73–112 (RVNA…LNLQ) and 124–177 (DVSP…GGNS). Composition is skewed to low complexity over residues 76-100 (AGLS…EALR) and 125-135 (VSPAATTVSSS). The segment covering 164–177 (ASGGGGGGGGGGNS) has biased composition (gly residues). The SBP-type zinc finger occupies 184 to 261 (YPMCQVDDCR…AGHNRRRRKT (78 aa)). The Zn(2+) site is built by cysteine 187, cysteine 192, cysteine 209, histidine 212, cysteine 228, cysteine 231, histidine 235, and cysteine 247. A Bipartite nuclear localization signal motif is present at residues 244 to 260 (KRSCRRRLAGHNRRRRK). Disordered regions lie at residues 327-382 (NNGN…ADGF), 403-472 (TSNP…TPPY), 496-517 (LSSE…PVTH), and 558-597 (KDSE…DGQD). Positions 345–375 (ASHSQQQDSVQRTTNGFEKQTNGLDKQTNGF) are enriched in polar residues. The span at 403–430 (TSNPDSNTSQSQGSSDSSGNNKSKSQST) shows a compositional bias: low complexity. Positions 450-466 (RKNDALERSPEMYKQPD) are enriched in basic and acidic residues. Residues 496–514 (LSSESSNPLDERSPSSSPP) show a composition bias toward polar residues. The segment covering 579–593 (TSTSCSDHSPSTSNS) has biased composition (low complexity).

Expressed in stems, leaf sheaths, and young panicles.

The protein resides in the nucleus. Functionally, trans-acting factor that binds specifically to the consensus nucleotide sequence 5'-TNCGTACAA-3'. This Oryza sativa subsp. indica (Rice) protein is Squamosa promoter-binding-like protein 15 (SPL15).